The sequence spans 240 residues: Histidinol dehydrogenase homolog oryD (240 aa).

Zn(2+) contacts are provided by Gln-64 and His-67. Glu-134 acts as the Proton acceptor in catalysis. Zn(2+) is bound by residues Asp-168 and His-228.

This sequence belongs to the histidinol dehydrogenase family. Zn(2+) serves as cofactor.

Its pathway is secondary metabolite biosynthesis. Functionally, histidinol dehydrogenase homolog; part of the gene cluster that mediates the biosynthesis of oryzines, natural products with an unusual maleidride backbone. The two subunits of the fungal fatty acid synthase oryfasA and oryfasB probably form octenoic acid. This fatty acid is most likely activated by the acyl-CoA ligase oryP to give octenyl-CoA before the citrate synthase-like protein oryE catalyzes condensation with oxaloacetate to form tricarboxylic acid. The next steps of the pathways are conjectural, but a favorite possible route has been proposed, beginning with decarboxylation and concomitant dehydration by the decarboxylase oryM, followed by tautomerization, which may lead to the production of a diene intermediate. Reduction of this diene intermediate could give the known metabolite piliformic acid. On the pathway to oryzine B and oryzine A, however, hydroxylation of the diene by the alpha-ketoglutarate-dependent dioxygenase oryG and lactonisation by the lactonohydrolases oryH or oryL could give oryzine B directly. Finally, enoyl reduction by the dehydrogenase oryD would then convert oryzine B into oryzine A. This Aspergillus oryzae (strain ATCC 42149 / RIB 40) (Yellow koji mold) protein is Histidinol dehydrogenase homolog oryD.